A 534-amino-acid polypeptide reads, in one-letter code: Nuclear hormone receptor FTZ-F1 (534 aa).

Positions 86–161 (EELCPVCGDK…VGMKLEAVRA (76 aa)) form a DNA-binding region, nuclear receptor. 2 consecutive NR C4-type zinc fingers follow at residues 89 to 109 (CPVCGDKVSGYHYGLLTCESC) and 125 to 149 (CVAERACHIDKTQRKRCPFCRFQKC). A compositionally biased stretch (low complexity) spans 227–246 (VSSLTSSPESSPGPALLGAQ). Residues 227–296 (VSSLTSSPES…SSTAEATSTE (70 aa)) form a disordered region. Residues 247–256 (PQPPQPPPPP) are compositionally biased toward pro residues. Low complexity predominate over residues 278–296 (TQSNTAATPSSTAEATSTE). Residues 299–531 (RVSPMIREFV…TLLMEMLHAK (233 aa)) form the NR LBD domain.

It belongs to the nuclear hormone receptor family. NR5 subfamily. As to expression, present in all tissues examined.

The protein localises to the nucleus. May play an important role in development. The sequence is that of Nuclear hormone receptor FTZ-F1 (FTZ-F1) from Bombyx mori (Silk moth).